Here is a 1612-residue protein sequence, read N- to C-terminus: Roundabout homolog 1 (1612 aa).

Residues 1 to 19 (MIAEPAHFYLFGLICLCSG) form the signal peptide. Over 20-858 (SRLRQEDFPP…QQISDVVRQP (839 aa)) the chain is Extracellular. Ig-like C2-type domains follow at residues 29–125 (PRIV…ASLE), 131–218 (DDFR…AELT), 223–307 (PSFV…ATLT), 312–407 (PHFV…LEVT), and 416–502 (PVIR…AYIE). Cys-50 and Cys-108 are joined by a disulfide. N-linked (GlcNAc...) asparagine glycosylation is present at Asn-121. Disulfide bonds link Cys-152-Cys-201, Cys-244-Cys-291, and Cys-333-Cys-389. Residue Asn-424 is glycosylated (N-linked (GlcNAc...) asparagine). A disulfide bond links Cys-437 and Cys-486. 3 consecutive Fibronectin type-III domains span residues 524-618 (APSK…TQDV), 637-734 (VVLH…TLEE), and 739-835 (PPRS…LDSH). Residues Asn-751, Asn-781, and Asn-788 are each glycosylated (N-linked (GlcNAc...) asparagine). Residues 859–879 (AFIAGIGAACWIILMVFSIWL) form a helical membrane-spanning segment. Residues 880 to 1612 (YRHRKKRNGL…NNEELEETES (733 aa)) lie on the Cytoplasmic side of the membrane. The residue at position 901 (Ser-901) is a Phosphoserine. Position 909 is a phosphothreonine (Thr-909). Residue Tyr-999 is modified to Phosphotyrosine. Ser-1016 bears the Phosphoserine mark. Phosphotyrosine is present on Tyr-1034. The segment at 1045–1068 (SNNMNNGAGDSSEKHWKPPGQQKP) is disordered. Phosphotyrosine is present on Tyr-1075. Disordered regions lie at residues 1088–1298 (RAND…ADME), 1313–1358 (EQTP…DGSF), and 1381–1612 (RRQM…ETES). Polar residues predominate over residues 1098–1107 (PYNQSYDQNT). Residues 1108 to 1124 (GGSYNSSDRGSSTSGSQ) are compositionally biased toward low complexity. The span at 1147-1157 (LPPPPAHPPPH) shows a compositional bias: pro residues. The residue at position 1201 (Thr-1201) is a Phosphothreonine. Residues 1216–1230 (YSHQSTATLTPSPQE) show a composition bias toward polar residues. A compositionally biased stretch (basic and acidic residues) spans 1242–1254 (DLGHMPHPPDRRR). A compositionally biased stretch (pro residues) spans 1257–1268 (VSPPPPPRPISP). Phosphoserine is present on Ser-1258. The segment covering 1283-1297 (MDTDAPEEEEDEADM) has biased composition (acidic residues). Residues 1345 to 1358 (SSGRSSVSSSDGSF) show a composition bias toward low complexity. Residues 1399–1412 (PRPTSPVSTDSNMS) show a composition bias toward polar residues. A compositionally biased stretch (basic residues) spans 1420–1431 (RPAKKQKHQPGH). A compositionally biased stretch (pro residues) spans 1441–1451 (LPPPPVPPPAI). Basic and acidic residues-rich tracts occupy residues 1477-1502 (ARTD…RQVT) and 1510-1534 (DPRE…RDLP). Residues 1553-1562 (FPTSNNPRDP) show a composition bias toward polar residues. The span at 1563-1575 (SSSSSMSSRGSGS) shows a compositional bias: low complexity. Residues 1603–1612 (NNEELEETES) show a composition bias toward acidic residues.

Belongs to the immunoglobulin superfamily. ROBO family. Homodimer. Dimerization is mediated by the extracellular domain and is independent of SLIT liganding. Interacts with SLIT1 Interacts with SLIT2. Interacts with FLRT3. Interacts with MYO9B (via Rho-GAP domain). Post-translationally, ubiquitinated. May be deubiquitinated by USP33. Detected in embryonic thalamus neurons (at protein level). Expressed in embryonal spinal cord. Expressed in embryonal lung, and in adult lung bronchial epithelial cells of large proximal airways.

It is found in the cell membrane. Its subcellular location is the cell projection. It localises to the axon. The protein localises to the endoplasmic reticulum-Golgi intermediate compartment membrane. Functionally, receptor for SLIT1 and SLIT2 that mediates cellular responses to molecular guidance cues in cellular migration, including axonal navigation at the ventral midline of the neural tube and projection of axons to different regions during neuronal development. Interaction with the intracellular domain of FLRT3 mediates axon attraction towards cells expressing NTN1. In axon growth cones, the silencing of the attractive effect of NTN1 by SLIT2 may require the formation of a ROBO1-DCC complex. Plays a role in the regulation of cell migration via its interaction with MYO9B; inhibits MYO9B-mediated stimulation of RHOA GTPase activity, and thereby leads to increased levels of active, GTP-bound RHOA. May be required for lung development. The polypeptide is Roundabout homolog 1 (Robo1) (Mus musculus (Mouse)).